Here is a 202-residue protein sequence, read N- to C-terminus: Imidazoleglycerol-phosphate dehydratase (202 aa).

The protein belongs to the imidazoleglycerol-phosphate dehydratase family. In terms of assembly, homotrimer.

It catalyses the reaction D-erythro-1-(imidazol-4-yl)glycerol 3-phosphate = 3-(imidazol-4-yl)-2-oxopropyl phosphate + H2O. It participates in amino-acid biosynthesis; L-histidine biosynthesis; L-histidine from 5-phospho-alpha-D-ribose 1-diphosphate: step 6/9. This chain is Imidazoleglycerol-phosphate dehydratase (HIS3), found in Cryptococcus neoformans var. neoformans serotype D (strain B-3501A) (Filobasidiella neoformans).